The primary structure comprises 92 residues: Small ribosomal subunit protein uS19 (92 aa).

The protein belongs to the universal ribosomal protein uS19 family.

Its function is as follows. Protein S19 forms a complex with S13 that binds strongly to the 16S ribosomal RNA. The chain is Small ribosomal subunit protein uS19 from Prochlorococcus marinus (strain MIT 9301).